Reading from the N-terminus, the 248-residue chain is Uridylate kinase (248 aa).

Residue 13–16 (KLSG) participates in ATP binding. G55 provides a ligand contact to UMP. ATP contacts are provided by G56 and R60. UMP-binding positions include D75 and 136–143 (TGNPYFTT). The ATP site is built by T163, Y169, and D172.

Belongs to the UMP kinase family. Homohexamer.

It is found in the cytoplasm. It catalyses the reaction UMP + ATP = UDP + ADP. The protein operates within pyrimidine metabolism; CTP biosynthesis via de novo pathway; UDP from UMP (UMPK route): step 1/1. Its activity is regulated as follows. Inhibited by UTP. Its function is as follows. Catalyzes the reversible phosphorylation of UMP to UDP. The polypeptide is Uridylate kinase (Leptospira interrogans serogroup Icterohaemorrhagiae serovar copenhageni (strain Fiocruz L1-130)).